A 302-amino-acid polypeptide reads, in one-letter code: Tegument protein VP22 (302 aa).

The span at 1–10 (MASSDGDRLC) shows a compositional bias: basic and acidic residues. Disordered stretches follow at residues 1–42 (MASS…PDDS) and 125–170 (SFTK…SSWC). Positions 154–244 (RPISFSTAPK…ANEADLGEGA (91 aa)) are interaction with gE. The segment covering 157-170 (SFSTAPKTATSSWC) has biased composition (polar residues). The Nuclear export signal signature appears at 212–224 (LDRLLTGAVIRIT). The disordered stretch occupies residues 243 to 302 (GASVSKRGHNRKTGDLQGGMGNEPMYAQVRKPKSRTDTQTTGRITNRSRARSASRTDTRK).

The protein belongs to the alphaherpesvirinae VP22 tegument protein family. In terms of assembly, interacts with gE (via C-terminus); this interaction is necessary for the recruitment of VP22/ORF9 to the Golgi and its packaging into virions. Interacts with gM (via C-terminus). Interacts with VP16/ORF10; this interaction allows the formation of a tripartite complex composed of VP16/ORF10, VP22/ORF9 and VHS/ORF17. Interacts with the capsid-binding protein ORF44. Interacts with host CGAS. In terms of processing, highly phosphorylated in the host cell. Packaging is selective for underphosphorylated forms.

Its subcellular location is the virion tegument. It localises to the host cytoplasm. The protein localises to the host nucleus. It is found in the host Golgi apparatus. Its function is as follows. Tegument protein that plays different roles during the time course of infection. Participates in both the accumulation of viral mRNAs and viral protein translation at late time of infection. Modulates the RNase activity of the virion host shutoff protein ORF17 probably to ensure necessary levels of key cellular mRNAs and proteins. Plays a role in microtubule reorganization that occurs after viral infection by stabilizing microtubule network. Plays a role in the inhibition of host innate immune system by targeting the CGAS enzymatic activity which is the principal cytosolic DNA sensor that detects invading viral DNA. Acts by mediating disruption of liquid-like droplets in which CGAS is activated, thereby preventing CGAS activity. This Homo sapiens (Human) protein is Tegument protein VP22.